Consider the following 309-residue polypeptide: Porphobilinogen deaminase (309 aa).

At cysteine 234 the chain carries S-(dipyrrolylmethanemethyl)cysteine.

Belongs to the HMBS family. In terms of assembly, monomer. Dipyrromethane is required as a cofactor.

It catalyses the reaction 4 porphobilinogen + H2O = hydroxymethylbilane + 4 NH4(+). It participates in porphyrin-containing compound metabolism; protoporphyrin-IX biosynthesis; coproporphyrinogen-III from 5-aminolevulinate: step 2/4. Tetrapolymerization of the monopyrrole PBG into the hydroxymethylbilane pre-uroporphyrinogen in several discrete steps. The chain is Porphobilinogen deaminase (hemC) from Mycobacterium bovis (strain ATCC BAA-935 / AF2122/97).